We begin with the raw amino-acid sequence, 163 residues long: Succinate dehydrogenase assembly factor 2-B, mitochondrial (163 aa).

Residues 1–23 constitute a mitochondrion transit peptide; the sequence is MFRQLRLTMDISGWIFMPWRRSL.

It belongs to the SDHAF2 family. As to quaternary structure, interacts with the flavoprotein subunit within the SDH catalytic dimer.

The protein localises to the mitochondrion matrix. Functionally, plays an essential role in the assembly of succinate dehydrogenase (SDH), an enzyme complex (also referred to as respiratory complex II) that is a component of both the tricarboxylic acid (TCA) cycle and the mitochondrial electron transport chain, and which couples the oxidation of succinate to fumarate with the reduction of ubiquinone (coenzyme Q) to ubiquinol. Required for flavinylation (covalent attachment of FAD) of the flavoprotein subunit of the SDH catalytic dimer. In Drosophila ananassae (Fruit fly), this protein is Succinate dehydrogenase assembly factor 2-B, mitochondrial.